A 144-amino-acid polypeptide reads, in one-letter code: UPF0178 protein Exig_1155 (144 aa).

A disordered region spans residues 110 to 144; it reads IRRAGGRTKGPKKRTRQEDASFEQSFSRLLTEKTD. Basic residues predominate over residues 113–124; sequence AGGRTKGPKKRT.

This sequence belongs to the UPF0178 family.

This Exiguobacterium sibiricum (strain DSM 17290 / CCUG 55495 / CIP 109462 / JCM 13490 / 255-15) protein is UPF0178 protein Exig_1155.